The chain runs to 223 residues: Small ribosomal subunit protein uS3 (223 aa).

Residues 39 to 107 (VRSYLAKKLS…PVHINIQEIR (69 aa)) form the KH type-2 domain.

This sequence belongs to the universal ribosomal protein uS3 family. Part of the 30S ribosomal subunit. Forms a tight complex with proteins S10 and S14.

In terms of biological role, binds the lower part of the 30S subunit head. Binds mRNA in the 70S ribosome, positioning it for translation. This is Small ribosomal subunit protein uS3 from Nitrosococcus oceani (strain ATCC 19707 / BCRC 17464 / JCM 30415 / NCIMB 11848 / C-107).